The sequence spans 81 residues: Translational regulator CsrA (81 aa).

A compositionally biased stretch (polar residues) spans 59 to 71 (SQMQHLEQGNFPT). The segment at 59–81 (SQMQHLEQGNFPTSFDDDDFFNR) is disordered.

This sequence belongs to the CsrA/RsmA family. In terms of assembly, homodimer; the beta-strands of each monomer intercalate to form a hydrophobic core, while the alpha-helices form wings that extend away from the core.

Its subcellular location is the cytoplasm. A key translational regulator that binds mRNA to regulate translation initiation and/or mRNA stability. Mediates global changes in gene expression, shifting from rapid growth to stress survival by linking envelope stress, the stringent response and the catabolite repression systems. Usually binds in the 5'-UTR; binding at or near the Shine-Dalgarno sequence prevents ribosome-binding, repressing translation, binding elsewhere in the 5'-UTR can activate translation and/or stabilize the mRNA. Its function is antagonized by small RNA(s). This Psychrobacter sp. (strain PRwf-1) protein is Translational regulator CsrA.